A 501-amino-acid polypeptide reads, in one-letter code: Ribose import ATP-binding protein RbsA (501 aa).

ABC transporter domains lie at L6 to K242 and K253 to K495. ATP is bound at residue G38–S45.

Belongs to the ABC transporter superfamily. Ribose importer (TC 3.A.1.2.1) family. In terms of assembly, the complex is composed of an ATP-binding protein (RbsA), two transmembrane proteins (RbsC) and a solute-binding protein (RbsB).

It localises to the cell inner membrane. The catalysed reaction is D-ribose(out) + ATP + H2O = D-ribose(in) + ADP + phosphate + H(+). Part of the ABC transporter complex RbsABC involved in ribose import. Responsible for energy coupling to the transport system. The sequence is that of Ribose import ATP-binding protein RbsA from Vibrio parahaemolyticus serotype O3:K6 (strain RIMD 2210633).